The sequence spans 103 residues: uncharacterized protein (103 aa).

2 helical membrane-spanning segments follow: residues proline 42–alanine 62 and threonine 65–alanine 85.

It is found in the membrane. This is an uncharacterized protein from Saccharomyces cerevisiae (strain ATCC 204508 / S288c) (Baker's yeast).